The chain runs to 1195 residues: ATP-dependent DNA helicase Hel308 (1195 aa).

ATP-binding positions include Gln20 and Ile39–Thr46. One can recognise a Helicase ATP-binding domain in the interval Arg26 to Asp196. The DEAH box motif lies at Asp143 to His146. A DOD-type homing endonuclease domain is found at Phe451–Ile584.

This sequence belongs to the helicase family. Hel308 subfamily. In terms of assembly, monomer. Post-translationally, this protein undergoes a protein self splicing that involves a post-translational excision of the intervening region (intein) followed by peptide ligation.

The enzyme catalyses Couples ATP hydrolysis with the unwinding of duplex DNA by translocating in the 3'-5' direction.. The catalysed reaction is ATP + H2O = ADP + phosphate + H(+). Its function is as follows. DNA-dependent ATPase and 3'-5' DNA helicase that may be involved in repair of stalled replication forks. The protein is ATP-dependent DNA helicase Hel308 of Methanocaldococcus jannaschii (strain ATCC 43067 / DSM 2661 / JAL-1 / JCM 10045 / NBRC 100440) (Methanococcus jannaschii).